Reading from the N-terminus, the 316-residue chain is Transaldolase A (316 aa).

Lys-131 acts as the Schiff-base intermediate with substrate in catalysis.

It belongs to the transaldolase family. Type 1 subfamily. As to quaternary structure, homodimer.

It localises to the cytoplasm. It carries out the reaction D-sedoheptulose 7-phosphate + D-glyceraldehyde 3-phosphate = D-erythrose 4-phosphate + beta-D-fructose 6-phosphate. Its pathway is carbohydrate degradation; pentose phosphate pathway; D-glyceraldehyde 3-phosphate and beta-D-fructose 6-phosphate from D-ribose 5-phosphate and D-xylulose 5-phosphate (non-oxidative stage): step 2/3. Its function is as follows. Transaldolase is important for the balance of metabolites in the pentose-phosphate pathway. In Salmonella typhimurium (strain LT2 / SGSC1412 / ATCC 700720), this protein is Transaldolase A.